The sequence spans 461 residues: D-phenylhydantoinase (461 aa).

A divalent metal cation contacts are provided by histidine 59, histidine 61, and lysine 151. Lysine 151 is modified (N6-carboxylysine). A substrate-binding site is contributed by tyrosine 156. Residues histidine 182 and histidine 239 each coordinate a divalent metal cation. Serine 286 contributes to the substrate binding site. Aspartate 313 is an a divalent metal cation binding site. Asparagine 335 serves as a coordination point for substrate.

Belongs to the metallo-dependent hydrolases superfamily. Hydantoinase/dihydropyrimidinase family. Homotetramer. The cofactor is a divalent metal cation. Carboxylation allows a single lysine to coordinate two divalent metal cations.

The catalysed reaction is D-5-phenylhydantoin + H2O = N-carbamoyl-D-phenylglycine + H(+). Catalyzes the stereospecific hydrolysis of the cyclic amide bond of D-hydantoin derivatives with an aromatic side chains at the 5'-position. Has no activity on dihydropyrimidines. The physiological function is unknown. The sequence is that of D-phenylhydantoinase from Escherichia coli (strain SE11).